The sequence spans 406 residues: S-adenosylmethionine synthase (406 aa).

An ATP-binding site is contributed by 141 to 146; the sequence is GQGSMD.

It belongs to the AdoMet synthase 2 family. Homodimer. Mg(2+) is required as a cofactor.

It catalyses the reaction L-methionine + ATP + H2O = S-adenosyl-L-methionine + phosphate + diphosphate. It functions in the pathway amino-acid biosynthesis; S-adenosyl-L-methionine biosynthesis; S-adenosyl-L-methionine from L-methionine: step 1/1. Functionally, catalyzes the formation of S-adenosylmethionine from methionine and ATP. This chain is S-adenosylmethionine synthase (mat), found in Methanocaldococcus jannaschii (strain ATCC 43067 / DSM 2661 / JAL-1 / JCM 10045 / NBRC 100440) (Methanococcus jannaschii).